We begin with the raw amino-acid sequence, 226 residues long: Urease accessory protein UreF (226 aa).

Belongs to the UreF family. In terms of assembly, ureD, UreF and UreG form a complex that acts as a GTP-hydrolysis-dependent molecular chaperone, activating the urease apoprotein by helping to assemble the nickel containing metallocenter of UreC. The UreE protein probably delivers the nickel.

The protein localises to the cytoplasm. Required for maturation of urease via the functional incorporation of the urease nickel metallocenter. This chain is Urease accessory protein UreF, found in Burkholderia ambifaria (strain MC40-6).